Here is a 278-residue protein sequence, read N- to C-terminus: Aliphatic sulfonates import ATP-binding protein SsuB (278 aa).

The 222-residue stretch at 15 to 236 folds into the ABC transporter domain; that stretch reads LVLRDLSKRF…SQGDAAFAAL (222 aa). Position 47 to 54 (47 to 54) interacts with ATP; the sequence is GRSGCGKS. Basic and acidic residues predominate over residues 251–264; that stretch reads PERESFTHPNDGEP. Residues 251 to 278 form a disordered region; that stretch reads PERESFTHPNDGEPRWPGVPAHGVRWAV.

Belongs to the ABC transporter superfamily. Aliphatic sulfonates importer (TC 3.A.1.17.2) family. In terms of assembly, the complex is composed of two ATP-binding proteins (SsuB), two transmembrane proteins (SsuC) and a solute-binding protein (SsuA).

It is found in the cell inner membrane. The catalysed reaction is ATP + H2O + aliphatic sulfonate-[sulfonate-binding protein]Side 1 = ADP + phosphate + aliphatic sulfonateSide 2 + [sulfonate-binding protein]Side 1.. In terms of biological role, part of the ABC transporter complex SsuABC involved in aliphatic sulfonates import. Responsible for energy coupling to the transport system. This Albidiferax ferrireducens (strain ATCC BAA-621 / DSM 15236 / T118) (Rhodoferax ferrireducens) protein is Aliphatic sulfonates import ATP-binding protein SsuB.